Here is a 72-residue protein sequence, read N- to C-terminus: Large ribosomal subunit protein bL31c (72 aa).

The protein belongs to the bacterial ribosomal protein bL31 family. Type A subfamily. In terms of assembly, part of the 50S ribosomal subunit.

It is found in the plastid. It localises to the chloroplast. In terms of biological role, binds the 23S rRNA. In Phaeodactylum tricornutum (strain CCAP 1055/1), this protein is Large ribosomal subunit protein bL31c (rpl31).